The chain runs to 807 residues: MKYDFSALEKKWQARWADEQTFASSADQDKPKYYVLDMFPYPSGSGLHVGHLEGYTATDIMARYKRCQGHNVLHPMGWDAFGLPAEQFAIKTGTHPRLTTEKNVASFRETLKSMGFSYDWSREVNTTDPNYFKWTQWIFLKLYEKGLAYISEVDVNWCEELKVVLANEEVDEKIADGYTVVRRPLRQWVLKITAYAERLLEDLDEVDWPENVKQMQRNWIGRSEGVEIDFELRCHRTNLRVYTTRPDTLFGATYLVISPEHPMAEKLAIAQQLVEVKKYIEQAKLKTELERTGLQKEKTGVFTGSYAINPANGEALPVWISDFVLTSYGTGAIMSVPAHDSRDWEFAKKFGLPIREVIKSPHDVQEEVFDGKESVCVNSANDEISIDGLDFKTAFDRMATWLESKGKGKRKVNYKLRDWVFSRQRYWGEPIPIKHYEDGTMRPETNLPLTLPEVEAYHPTSTGESPLANIESWLYGEDEHGKFRRETNTMPQWAGSCWYYLRFIDPQNGNALVDPSREQYWMNVDLYIGGAEHAVLHLLYSRFWHKVLYDLGVVSTKEPFQRLFNQGMILGEDNEKMSKSRGNVIPADHVLSTYGADAVRLYEMFLGPLEQVKPWNTHGIEGISRFLNKVWRLVWDENTETQKTTDDKPSEAVLKRMHKAIKKVTEDTEQLKFNTAISEMMVLVNELTKTGCYSRETTETLLVLLSPFAPHITEELWQTLGHTESISGAVWPVFDAKLATDDVLTIAVQVNGKLRGTFEAPAGYAKEDMIESAKKVESVAKFLEGQQIIKEIAVPGKLVNFAVKPQQ.

A 'HIGH' region motif is present at residues 40-51 (PYPSGSGLHVGH). The 'KMSKS' region motif lies at 576–580 (KMSKS). Lys-579 lines the ATP pocket.

This sequence belongs to the class-I aminoacyl-tRNA synthetase family.

The protein localises to the cytoplasm. The catalysed reaction is tRNA(Leu) + L-leucine + ATP = L-leucyl-tRNA(Leu) + AMP + diphosphate. This chain is Leucine--tRNA ligase, found in Chlorobaculum parvum (strain DSM 263 / NCIMB 8327) (Chlorobium vibrioforme subsp. thiosulfatophilum).